Here is a 611-residue protein sequence, read N- to C-terminus: Aspartate--tRNA ligase, mitochondrial (611 aa).

The N-terminal 30 residues, 1–30, are a transit peptide targeting the mitochondrion; it reads MVLSRLPACLLPLVGTKVSIQGWLVATSRQ. Residue glutamate 192 coordinates L-aspartate. Positions 216–219 are aspartate; that stretch reads QQYK. Arginine 238 is a binding site for L-aspartate. ATP is bound by residues 238–240 and glutamate 502; that span reads RDE. An L-aspartate-binding site is contributed by arginine 509. Position 554–557 (554–557) interacts with ATP; sequence GFDR.

This sequence belongs to the class-II aminoacyl-tRNA synthetase family. Type 1 subfamily.

The protein localises to the mitochondrion. It carries out the reaction tRNA(Asp) + L-aspartate + ATP = L-aspartyl-tRNA(Asp) + AMP + diphosphate. In Schizosaccharomyces pombe (strain 972 / ATCC 24843) (Fission yeast), this protein is Aspartate--tRNA ligase, mitochondrial (msd1).